The following is a 406-amino-acid chain: MARPRTRSVARMEATAAAAAAAEEEEAGNPDGAEGAAVVAVAPEAAAEGPNEPNAGEASREPDAGQASREPDVAGPSRQPGAAGPSREPGAAGGPRQPGAAGGPWQLVPNAAGPAVAPYVEDIDRYLRSLEGREMAKCLDAVQFCTAEESRRPIVNYDQEIQGGHINMRGKLVNWMEELVYGFNLWDNILYLAVSYVDRFLSRNVVNRERLQLLGTSALFVASKYEDRCHPSARFFSSITADTYTTQQVVAMEANILSFLNFQMGSPTVITFLRRFLFSCRGSNRPINIRLELMCIYLAELSLLDDYNIRFLPSIVAAACLFVGKFTLNPNTRPWNLSVQRITGYKVSDIEDCIRSIHDLQAGRKWSNLRAIRSKYEDDAFERVSTIPSPNTIKPSFLRDLKYVNG.

The tract at residues methionine 1 to leucine 107 is disordered. Composition is skewed to low complexity over residues arginine 11 to alanine 21 and asparagine 29 to glutamate 57.

This sequence belongs to the cyclin family. Cyclin F subfamily.

This Oryza sativa subsp. japonica (Rice) protein is Putative cyclin-F3-2 (CYCF3-2).